The chain runs to 318 residues: MRFKGLDLNLLVALDALMTERKLTAAARSINLSQPAMSAAIGRLRAYFNDELFLMQQRRLVPTPRAEALAPAVREALLHIQLSVIAWDPLVPAESDRRFRIVLSDFMTLVFFEKVIKRVAREAPGVSFELLHVNDDPDERLRSGDLDFLILPDQFMSATHPSAKLFEDKLVCVGCPSNQQLRGKLSLKRFMSMGHVAAMFGRTLKPSIEQWLLLEHGFKRRVEIVVPGFNSIPMLLQGTNRIATLPLLLVRHFEPTIPLQIVDHPLPPLSFTEALQWPLLHNSDPGNIWMRNIILEEASRIETSSERCSQEPRATQSW.

The HTH lysR-type domain occupies 6–63; sequence LDLNLLVALDALMTERKLTAAARSINLSQPAMSAAIGRLRAYFNDELFLMQQRRLVPT. The H-T-H motif DNA-binding region spans 23–42; sequence LTAAARSINLSQPAMSAAIG.

The protein belongs to the LysR transcriptional regulatory family.

Its function is as follows. NodD regulates the expression of the nodABCFE genes which encode other nodulation proteins. NodD is also a negative regulator of its own expression. Binds flavonoids as inducers. The polypeptide is Nodulation protein D (nodD) (Rhizobium leguminosarum bv. trifolii).